The following is a 539-amino-acid chain: Glucose-6-phosphate isomerase (539 aa).

Glutamate 353 serves as the catalytic Proton donor. Catalysis depends on residues histidine 384 and lysine 505.

Belongs to the GPI family.

The protein localises to the cytoplasm. It carries out the reaction alpha-D-glucose 6-phosphate = beta-D-fructose 6-phosphate. It participates in carbohydrate biosynthesis; gluconeogenesis. The protein operates within carbohydrate degradation; glycolysis; D-glyceraldehyde 3-phosphate and glycerone phosphate from D-glucose: step 2/4. In terms of biological role, catalyzes the reversible isomerization of glucose-6-phosphate to fructose-6-phosphate. The sequence is that of Glucose-6-phosphate isomerase from Ralstonia nicotianae (strain ATCC BAA-1114 / GMI1000) (Ralstonia solanacearum).